The sequence spans 157 residues: MLLEGSCHCGAVRFRVVSPHPYPFNRCYCSICRKTAGGGGYAINLSGDADTLVVHGAEHTSIYQAEIDGLTSPGERHFCSRCASALWVFDPRWPELVHPFASAIDSDLPRPPERVHLMLENKPDWVEIESREQDRCFAGYPDESIAEWHARLGLEEG.

The CENP-V/GFA domain occupies 3–134; sequence LEGSCHCGAV…WVEIESREQD (132 aa). The Zn(2+) site is built by Cys7, Cys9, Cys27, Cys29, Cys32, Cys79, and Cys82.

The protein belongs to the Gfa family. Zn(2+) serves as cofactor.

It carries out the reaction S-(hydroxymethyl)glutathione = glutathione + formaldehyde. It functions in the pathway one-carbon metabolism; formaldehyde degradation; formate from formaldehyde (glutathione route): step 1/3. In terms of biological role, catalyzes the condensation of formaldehyde and glutathione to S-hydroxymethylglutathione. The chain is Putative glutathione-dependent formaldehyde-activating enzyme from Halomonas elongata (strain ATCC 33173 / DSM 2581 / NBRC 15536 / NCIMB 2198 / 1H9).